Consider the following 217-residue polypeptide: Somatotropin (217 aa).

The first 26 residues, 1–26, serve as a signal peptide directing secretion; it reads MATGSRTSLLLAFGLLCLPWLQEGSA. Histidine 44 serves as a coordination point for Zn(2+). Residues cysteine 79 and cysteine 191 are joined by a disulfide bond. Serine 132 carries the phosphoserine modification. At glutamine 163 the chain carries Deamidated glutamine; by deterioration. Serine 176 bears the Phosphoserine mark. Position 178 is a deamidated asparagine; by deterioration (asparagine 178). Residue glutamate 200 coordinates Zn(2+). A disulfide bridge links cysteine 208 with cysteine 215.

This sequence belongs to the somatotropin/prolactin family. As to quaternary structure, monomer, dimer, trimer, tetramer and pentamer, disulfide-linked or non-covalently associated, in homomeric and heteromeric combinations. Can also form a complex either with GHBP or with the alpha2-macroglobulin complex.

The protein localises to the secreted. Its function is as follows. Plays an important role in growth control. Its major role in stimulating body growth is to stimulate the liver and other tissues to secrete IGF1. It stimulates both the differentiation and proliferation of myoblasts. It also stimulates amino acid uptake and protein synthesis in muscle and other tissues. The polypeptide is Somatotropin (GH1) (Homo sapiens (Human)).